We begin with the raw amino-acid sequence, 137 residues long: Peptide methionine sulfoxide reductase MsrB (137 aa).

Residues 7–129 enclose the MsrB domain; that stretch reads AEELKKNLSD…NSASLRFTDG (123 aa). Cysteine 46, cysteine 49, cysteine 95, and cysteine 98 together coordinate Zn(2+). The active-site Nucleophile is cysteine 118.

Belongs to the MsrB Met sulfoxide reductase family. Zn(2+) is required as a cofactor.

It catalyses the reaction L-methionyl-[protein] + [thioredoxin]-disulfide + H2O = L-methionyl-(R)-S-oxide-[protein] + [thioredoxin]-dithiol. The polypeptide is Peptide methionine sulfoxide reductase MsrB (Shigella dysenteriae serotype 1 (strain Sd197)).